We begin with the raw amino-acid sequence, 275 residues long: NH(3)-dependent NAD(+) synthetase (275 aa).

46-53 (GISGGQDS) contributes to the ATP binding site. Residue D52 participates in Mg(2+) binding. A deamido-NAD(+)-binding site is contributed by R140. T160 is a binding site for ATP. E165 contacts Mg(2+). Residues K173 and D180 each coordinate deamido-NAD(+). ATP-binding residues include K189 and T211. 260–261 (HK) serves as a coordination point for deamido-NAD(+).

Belongs to the NAD synthetase family. In terms of assembly, homodimer.

The catalysed reaction is deamido-NAD(+) + NH4(+) + ATP = AMP + diphosphate + NAD(+) + H(+). The protein operates within cofactor biosynthesis; NAD(+) biosynthesis; NAD(+) from deamido-NAD(+) (ammonia route): step 1/1. Its function is as follows. Catalyzes the ATP-dependent amidation of deamido-NAD to form NAD. Uses ammonia as a nitrogen source. In Escherichia fergusonii (strain ATCC 35469 / DSM 13698 / CCUG 18766 / IAM 14443 / JCM 21226 / LMG 7866 / NBRC 102419 / NCTC 12128 / CDC 0568-73), this protein is NH(3)-dependent NAD(+) synthetase.